A 315-amino-acid polypeptide reads, in one-letter code: Malate dehydrogenase (315 aa).

NAD(+)-binding positions include 10-15 and aspartate 34; that span reads GAGNVG. 2 residues coordinate substrate: arginine 85 and arginine 91. NAD(+) is bound by residues asparagine 98 and 121-123; that span reads VSN. 2 residues coordinate substrate: asparagine 123 and arginine 154. Histidine 178 acts as the Proton acceptor in catalysis.

The protein belongs to the LDH/MDH superfamily. MDH type 3 family.

It catalyses the reaction (S)-malate + NAD(+) = oxaloacetate + NADH + H(+). Its function is as follows. Catalyzes the reversible oxidation of malate to oxaloacetate. This Rhodopirellula baltica (strain DSM 10527 / NCIMB 13988 / SH1) protein is Malate dehydrogenase.